A 79-amino-acid polypeptide reads, in one-letter code: Translational regulator CsrA (79 aa).

This sequence belongs to the CsrA/RsmA family. In terms of assembly, homodimer; the beta-strands of each monomer intercalate to form a hydrophobic core, while the alpha-helices form wings that extend away from the core.

The protein localises to the cytoplasm. In terms of biological role, a translational regulator that binds mRNA to regulate translation initiation and/or mRNA stability. Usually binds in the 5'-UTR at or near the Shine-Dalgarno sequence preventing ribosome-binding, thus repressing translation. Its main target seems to be the major flagellin gene, while its function is anatagonized by FliW. The protein is Translational regulator CsrA of Helicobacter hepaticus (strain ATCC 51449 / 3B1).